A 218-amino-acid chain; its full sequence is Kappa-scoloptoxin(11)-Ssd1b (218 aa).

Residues 1–16 (MFYSHLLFFTFTFACS) form the signal peptide. Residues 17–25 (SSLNRKTKR) constitute a propeptide that is removed on maturation.

Post-translationally, contains 8 disulfide bonds. Expressed by the venom gland.

The protein resides in the secreted. In terms of biological role, voltage-gated potassium channel inhibitor. The chain is Kappa-scoloptoxin(11)-Ssd1b from Scolopendra dehaani (Thai centipede).